Reading from the N-terminus, the 424-residue chain is MFYDQAKIYVKGGDGGAGAVAFRREKYVPEGGPSGGDGGRGGKVIFIADEGLRTLVDFRYKRHYKADRGEHGQGKNMHGKSGEDMSVRIPVGTVVKDADTGEILADLIEHGQKVVVANGGRGGRGNARFMSNTNKAPTVAENGEPGEERNLLLELKLLADVGLVGFPNVGKSTIISRISAAKPKIADYHFTTLVPNLGVVELEDGESFVVADIPGLIEGAHTGAGLGHEFLRHTERTRLIFHVLDIAGSEERDPLEDFQIIAEELRQYSQELANRPILIVANKMDIPGAEENLQRLTEKLGEDYRIFPVSAATGEGLKELVYAAAKALPEIPAPQIFVRDEEQHKLTQASAPHRFELTREGDFFVVSGKEIEKHVQMTMFDREDGLYRFQNILKAMGIERALLDEGIKVGDKVRIAGIEFEWEE.

The Obg domain occupies 1–158; it reads MFYDQAKIYV…RNLLLELKLL (158 aa). In terms of domain architecture, OBG-type G spans 159-329; the sequence is ADVGLVGFPN…LVYAAAKALP (171 aa). Residues 165-172, 190-194, 212-215, 282-285, and 310-312 contribute to the GTP site; these read GFPNVGKS, FTTLV, DIPG, NKMD, and SAA. The Mg(2+) site is built by S172 and T192. Residues 347 to 424 form the OCT domain; that stretch reads TQASAPHRFE…IAGIEFEWEE (78 aa).

This sequence belongs to the TRAFAC class OBG-HflX-like GTPase superfamily. OBG GTPase family. In terms of assembly, monomer. It depends on Mg(2+) as a cofactor.

It is found in the cytoplasm. Its function is as follows. An essential GTPase which binds GTP, GDP and possibly (p)ppGpp with moderate affinity, with high nucleotide exchange rates and a fairly low GTP hydrolysis rate. Plays a role in control of the cell cycle, stress response, ribosome biogenesis and in those bacteria that undergo differentiation, in morphogenesis control. This chain is GTPase Obg, found in Desulfitobacterium hafniense (strain Y51).